The following is a 563-amino-acid chain: Light-independent protochlorophyllide reductase subunit B (563 aa).

D36 serves as a coordination point for [4Fe-4S] cluster. The Proton donor role is filled by D293. 437 to 438 contributes to the substrate binding site; the sequence is GM. The tract at residues 459 to 478 is disordered; the sequence is ERREAEFGNQKVETGEPGTG.

It belongs to the ChlB/BchB/BchZ family. In terms of assembly, protochlorophyllide reductase is composed of three subunits; BchL, BchN and BchB. Forms a heterotetramer of two BchB and two BchN subunits. [4Fe-4S] cluster serves as cofactor.

It catalyses the reaction chlorophyllide a + oxidized 2[4Fe-4S]-[ferredoxin] + 2 ADP + 2 phosphate = protochlorophyllide a + reduced 2[4Fe-4S]-[ferredoxin] + 2 ATP + 2 H2O. It functions in the pathway porphyrin-containing compound metabolism; bacteriochlorophyll biosynthesis (light-independent). In terms of biological role, component of the dark-operative protochlorophyllide reductase (DPOR) that uses Mg-ATP and reduced ferredoxin to reduce ring D of protochlorophyllide (Pchlide) to form chlorophyllide a (Chlide). This reaction is light-independent. The NB-protein (BchN-BchB) is the catalytic component of the complex. The protein is Light-independent protochlorophyllide reductase subunit B of Roseiflexus castenholzii (strain DSM 13941 / HLO8).